A 289-amino-acid chain; its full sequence is MSAGIRTYLELMRYKNCLMAGFAAAIGTLIAFNILISGTSTPNFEDAFPFLDAGLVFLVVFLVSGAGNAINDYFDIKIDSINRPERPIPSGRVKAKEAFYFSYLLFALGTLIAFSINSICGSIALFNSLLLILYAKTLKGTPLLGNLSIGYLTGSVFLFGASIFGFGGIKALSVLFLLAALAITAREIVKDIEDMEGDSLEGADTLPLRIGAKKAGYLAVLTGLLAVILSPLPYFMSVLGLRYIYLVSLADLGFLAAIIQLLVRNNPTKSSKLFKIAMFFALIAFIAGV.

8 helical membrane-spanning segments follow: residues 18–38 (LMAG…LISG), 47–67 (AFPF…SGAG), 99–119 (FYFS…INSI), 120–140 (CGSI…TLKG), 163–183 (IFGF…ALAI), 218–238 (LAVL…FMSV), 243–263 (YIYL…QLLV), and 269–289 (KSSK…IAGV).

Belongs to the UbiA prenyltransferase family. DGGGP synthase subfamily. Requires Mg(2+) as cofactor.

The protein resides in the cell membrane. It carries out the reaction sn-3-O-(geranylgeranyl)glycerol 1-phosphate + (2E,6E,10E)-geranylgeranyl diphosphate = 2,3-bis-O-(geranylgeranyl)-sn-glycerol 1-phosphate + diphosphate. The protein operates within membrane lipid metabolism; glycerophospholipid metabolism. Functionally, prenyltransferase that catalyzes the transfer of the geranylgeranyl moiety of geranylgeranyl diphosphate (GGPP) to the C2 hydroxyl of (S)-3-O-geranylgeranylglyceryl phosphate (GGGP). This reaction is the second ether-bond-formation step in the biosynthesis of archaeal membrane lipids. The polypeptide is Digeranylgeranylglyceryl phosphate synthase (Methanosarcina mazei (strain ATCC BAA-159 / DSM 3647 / Goe1 / Go1 / JCM 11833 / OCM 88) (Methanosarcina frisia)).